Here is a 108-residue protein sequence, read N- to C-terminus: uncharacterized protein (108 aa).

The span at Met-1 to Gly-15 shows a compositional bias: polar residues. The disordered stretch occupies residues Met-1 to Gly-29. A compositionally biased stretch (basic and acidic residues) spans Arg-16 to Gly-29.

It belongs to the SUI1 family.

This is an uncharacterized protein from Salmonella typhi.